Consider the following 352-residue polypeptide: 4-hydroxy-2-oxovalerate aldolase (352 aa).

The Pyruvate carboxyltransferase domain maps to 13–265; it reads VRLTDTSLRD…KTGIDFFDIA (253 aa). 21-22 is a substrate binding site; that stretch reads RD. Residue D22 coordinates Mn(2+). The Proton acceptor role is filled by H25. The substrate site is built by S175 and H204. The Mn(2+) site is built by H204 and H206. Residue Y295 coordinates substrate.

It belongs to the 4-hydroxy-2-oxovalerate aldolase family.

The enzyme catalyses (S)-4-hydroxy-2-oxopentanoate = acetaldehyde + pyruvate. This Mycolicibacterium paratuberculosis (strain ATCC BAA-968 / K-10) (Mycobacterium paratuberculosis) protein is 4-hydroxy-2-oxovalerate aldolase.